Here is a 383-residue protein sequence, read N- to C-terminus: METLASRLDACQETLLELYEKDSNKLEDQIKHWAQVRLENVMLFKARECGMTRVGCTTVPALTVSKAKACQAIEVQLALQTLMQSAYSTEAWTLRDTCLEMWEAPPKRCWKKKGQSVLVKFDGSCDRDMIYTGWGHIYVQDINDDTWHKVPGQVDELGLFYVHDGVRVNYVDFGIEALTYGVTGTWEVQVGGRVIYHTSASVSSTQAATSDDDTLSPLRSAAAAVTATATATTAVPPTLQDSAQAPSSPPPKRQRVIVGQQWQQPDSTRKVREGQVECQNDRSIRNPDSTDPRRGHSDLDAVPVIHLQGEANCLKCFRYRVQKHKDVLFVKASSTWHWACGNGDKTAFVTLWYKSQEQRAEFLTRVHLPKGVKALPGYMSAFV.

The interval 1–202 (METLASRLDA…RVIYHTSASV (202 aa)) is transactivation domain. A disordered region spans residues 233 to 297 (TAVPPTLQDS…DSTDPRRGHS (65 aa)). Over residues 267-297 (STRKVREGQVECQNDRSIRNPDSTDPRRGHS) the composition is skewed to basic and acidic residues. The DNA-binding domain stretch occupies residues 303–383 (PVIHLQGEAN…ALPGYMSAFV (81 aa)).

It belongs to the papillomaviridae E2 protein family. As to quaternary structure, binds DNA as homodimer. Interacts with protein E1; this interaction greatly increases E1 DNA-binding activity. Interacts with protein L1; this interaction enhances E2-dependent replication and transcription activation. Interacts with protein L2; this interaction inhibits E2 transcriptional activity but not DNA replication function E2. Interacts with protein E7; this interaction inhibits E7 oncogenic activity. Interacts with host TAF1; this interaction modulates E2-dependent transcriptional regulation. Interacts with host BRD4; this interaction mediates E2 transcriptional activation function. Additionally, the interaction with host BRD4 on mitotic chromosomes mediates tethering of the viral genome. Interacts with host TOPBP1; this interaction is required for optimal viral DNA replication. In terms of processing, phosphorylated.

The protein resides in the host nucleus. Functionally, plays a role in the initiation of viral DNA replication. A dimer of E2 interacts with a dimer of E1 in order to improve specificity of E1 DNA binding activity. Once the complex recognizes and binds DNA at specific sites, the E2 dimer is removed from DNA. E2 also regulates viral transcription through binding to the E2RE response element (5'-ACCNNNNNNGGT-3') present in multiple copies in the regulatory regions of the viral genome. Activates or represses transcription depending on E2RE's position with regards to proximal promoter elements including the TATA-box. Repression occurs by sterically hindering the assembly of the transcription initiation complex. The sequence is that of Regulatory protein E2 from Human papillomavirus 57.